We begin with the raw amino-acid sequence, 596 residues long: Serine/arginine (SR)-type shuttling mRNA binding protein (596 aa).

Residues M1–T11 show a composition bias toward polar residues. 2 disordered regions span residues M1 to S83 and D244 to P279. Composition is skewed to basic and acidic residues over residues H12 to A23 and S42 to N66. The RRM 1 domain occupies F182–E246. Residues P259 to S275 show a composition bias toward gly residues. The RRM 2 domain maps to T302–F379. A disordered region spans residues G458 to P478. Residues Q480–R556 form the RRM 3 domain. Positions G563–D572 are enriched in gly residues. The interval G563–G596 is disordered.

The protein resides in the nucleus. In terms of biological role, binds to intron-containing transcripts and is involved in quality control for the export of spliced mRNAs from the nucleus. Binds to pre-mRNAs until splicing is completed or until faulty mRNAs are degraded. This Mycosarcoma maydis (Corn smut fungus) protein is Serine/arginine (SR)-type shuttling mRNA binding protein.